Consider the following 181-residue polypeptide: Transcriptional repressor NrdR (181 aa).

A zinc finger spans residues 3–34; the sequence is CPYCQHTDSRVLESRSTGAGRSIRRRRECLSC. Positions 49–139 constitute an ATP-cone domain; it reads ISVIKRNGQS…VYRQFQGVDD (91 aa).

This sequence belongs to the NrdR family. The cofactor is Zn(2+).

Its function is as follows. Negatively regulates transcription of bacterial ribonucleotide reductase nrd genes and operons by binding to NrdR-boxes. This chain is Transcriptional repressor NrdR, found in Picosynechococcus sp. (strain ATCC 27264 / PCC 7002 / PR-6) (Agmenellum quadruplicatum).